Reading from the N-terminus, the 253-residue chain is Ribonuclease HII (253 aa).

The RNase H type-2 domain occupies 70-253 (PLVAGIDEVG…RSFSPVQNAL (184 aa)). The a divalent metal cation site is built by Asp-76, Glu-77, and Asp-168.

It belongs to the RNase HII family. Requires Mn(2+) as cofactor. Mg(2+) serves as cofactor.

It localises to the cytoplasm. It carries out the reaction Endonucleolytic cleavage to 5'-phosphomonoester.. Functionally, endonuclease that specifically degrades the RNA of RNA-DNA hybrids. This is Ribonuclease HII from Latilactobacillus sakei subsp. sakei (strain 23K) (Lactobacillus sakei subsp. sakei).